Reading from the N-terminus, the 429-residue chain is Uterine milk protein (429 aa).

A signal peptide spans methionine 1–cysteine 25. Residues asparagine 222 and asparagine 268 are each glycosylated (N-linked (GlcNAc...) asparagine).

The protein belongs to the serpin family. UTMP subfamily. Glycosylated; carries the so-called mannose 6-phosphate lysosomal recognition marker on its carbohydrate chains. As to expression, secreted by ovine endometrium under the influence of progesterone.

This Ovis aries (Sheep) protein is Uterine milk protein.